The chain runs to 456 residues: Nuclear distribution protein PAC1 (456 aa).

The LisH domain occupies 9–41 (QADELHKSIIAYLSANDLPNTAAALRAELNLTE). A coiled-coil region spans residues 61–88 (TSIVRLQKKIMDLEARNAALQSELDNLT). WD repeat units lie at residues 114–153 (SHRD…LEMT), 156–197 (GHTR…KNVR), 201–240 (GHDH…CVRS), 243–282 (GHTG…NPEN), 288–348 (GHEH…LMTL), 350–389 (GHDN…KCVK), 394–437 (AHDR…PDVQ), and 439–456 (RCVI…IFAA).

This sequence belongs to the WD repeat LIS1/nudF family. As to quaternary structure, self-associates. Interacts with NDL1 and dynein.

It localises to the cytoplasm. Its subcellular location is the cytoskeleton. It is found in the spindle pole. Its function is as follows. Positively regulates the activity of the minus-end directed microtubule motor protein dynein. May enhance dynein-mediated microtubule sliding by targeting dynein to the microtubule plus end. Required for nuclear migration during vegetative growth as well as development. Required for retrograde early endosome (EE) transport from the hyphal tip. Required for localization of dynein to the mitotic spindle poles. Recruits additional proteins to the dynein complex at SPBs. The polypeptide is Nuclear distribution protein PAC1 (Ajellomyces capsulatus (strain H143) (Darling's disease fungus)).